The sequence spans 721 residues: Photosystem I P700 chlorophyll a apoprotein A1 (721 aa).

8 helical membrane passes run 61-84, 147-170, 186-210, 282-300, 337-360, 376-402, 424-446, and 522-540; these read VFSA…FHGA, LYCT…FHYH, LNHH…HVSL, TAHH…GHMY, WHAQ…HHMY, LSLF…IFMV, AIVS…LYIH, and FLVH…LILL. [4Fe-4S] cluster-binding residues include cysteine 564 and cysteine 573. The next 2 helical transmembrane spans lie at 580–601 and 655–677; these read HVFL…HFSW and LSAY…MFLF. Chlorophyll a' is bound at residue histidine 666. Positions 674 and 682 each coordinate chlorophyll a. Tryptophan 683 is a phylloquinone binding site. The chain crosses the membrane as a helical span at residues 715–721; that stretch reads AVGVAHY.

The protein belongs to the PsaA/PsaB family. In terms of assembly, the PsaA/B heterodimer binds the P700 chlorophyll special pair and subsequent electron acceptors. PSI consists of a core antenna complex that captures photons, and an electron transfer chain that converts photonic excitation into a charge separation. The eukaryotic PSI reaction center is composed of at least 11 subunits. Requires P700 is a chlorophyll a/chlorophyll a' dimer, A0 is one or more chlorophyll a, A1 is one or both phylloquinones and FX is a shared 4Fe-4S iron-sulfur center. as cofactor.

It localises to the plastid. The protein resides in the chloroplast thylakoid membrane. The enzyme catalyses reduced [plastocyanin] + hnu + oxidized [2Fe-2S]-[ferredoxin] = oxidized [plastocyanin] + reduced [2Fe-2S]-[ferredoxin]. Its function is as follows. PsaA and PsaB bind P700, the primary electron donor of photosystem I (PSI), as well as the electron acceptors A0, A1 and FX. PSI is a plastocyanin-ferredoxin oxidoreductase, converting photonic excitation into a charge separation, which transfers an electron from the donor P700 chlorophyll pair to the spectroscopically characterized acceptors A0, A1, FX, FA and FB in turn. Oxidized P700 is reduced on the lumenal side of the thylakoid membrane by plastocyanin. This Ginkgo biloba (Ginkgo) protein is Photosystem I P700 chlorophyll a apoprotein A1.